The primary structure comprises 185 residues: Photosystem I assembly protein Ycf4 (185 aa).

2 helical membrane-spanning segments follow: residues 24-44 (YLIG…SISS) and 66-86 (IIMG…WYLV).

This sequence belongs to the Ycf4 family.

It localises to the cellular thylakoid membrane. Functionally, seems to be required for the assembly of the photosystem I complex. The sequence is that of Photosystem I assembly protein Ycf4 from Prochlorococcus marinus (strain MIT 9515).